Reading from the N-terminus, the 94-residue chain is Co-chaperonin GroES (94 aa).

It belongs to the GroES chaperonin family. In terms of assembly, heptamer of 7 subunits arranged in a ring. Interacts with the chaperonin GroEL.

It localises to the cytoplasm. Together with the chaperonin GroEL, plays an essential role in assisting protein folding. The GroEL-GroES system forms a nano-cage that allows encapsulation of the non-native substrate proteins and provides a physical environment optimized to promote and accelerate protein folding. GroES binds to the apical surface of the GroEL ring, thereby capping the opening of the GroEL channel. This is Co-chaperonin GroES from Listeria welshimeri serovar 6b (strain ATCC 35897 / DSM 20650 / CCUG 15529 / CIP 8149 / NCTC 11857 / SLCC 5334 / V8).